Here is a 232-residue protein sequence, read N- to C-terminus: Large ribosomal subunit protein uL1 (232 aa).

Belongs to the universal ribosomal protein uL1 family. Part of the 50S ribosomal subunit.

In terms of biological role, binds directly to 23S rRNA. The L1 stalk is quite mobile in the ribosome, and is involved in E site tRNA release. Protein L1 is also a translational repressor protein, it controls the translation of the L11 operon by binding to its mRNA. This Variovorax paradoxus (strain S110) protein is Large ribosomal subunit protein uL1.